We begin with the raw amino-acid sequence, 113 residues long: U11-theraphotoxin-Hhn1a (113 aa).

Positions 1-21 (MNTVRVTFLPVFVLAVSLGQA) are cleaved as a signal peptide. Positions 22 to 74 (DKDENRMEMQEKTEQGKSYLDFAENLLLQKLEELEAKLLEEDSEESRNSRQKR) are excised as a propeptide. Positions 61–83 (EEDSEESRNSRQKRCIGEGVPCD) are disordered. Disulfide bonds link cysteine 75–cysteine 90, cysteine 82–cysteine 95, and cysteine 89–cysteine 110.

Belongs to the neurotoxin 14 (magi-1) family. 01 (HNTX-16) subfamily. Expressed by the venom gland.

The protein resides in the secreted. The protein is U11-theraphotoxin-Hhn1a of Cyriopagopus hainanus (Chinese bird spider).